The following is a 314-amino-acid chain: 4-hydroxy-3-methylbut-2-enyl diphosphate reductase (314 aa).

Cysteine 12 provides a ligand contact to [4Fe-4S] cluster. Residues histidine 41 and histidine 74 each coordinate (2E)-4-hydroxy-3-methylbut-2-enyl diphosphate. 2 residues coordinate dimethylallyl diphosphate: histidine 41 and histidine 74. Isopentenyl diphosphate is bound by residues histidine 41 and histidine 74. Cysteine 96 provides a ligand contact to [4Fe-4S] cluster. Histidine 124 contacts (2E)-4-hydroxy-3-methylbut-2-enyl diphosphate. Dimethylallyl diphosphate is bound at residue histidine 124. Residue histidine 124 participates in isopentenyl diphosphate binding. Glutamate 126 acts as the Proton donor in catalysis. Threonine 167 contacts (2E)-4-hydroxy-3-methylbut-2-enyl diphosphate. Residue cysteine 197 participates in [4Fe-4S] cluster binding. (2E)-4-hydroxy-3-methylbut-2-enyl diphosphate contacts are provided by serine 225, serine 226, asparagine 227, and serine 269. Dimethylallyl diphosphate is bound by residues serine 225, serine 226, asparagine 227, and serine 269. Isopentenyl diphosphate contacts are provided by serine 225, serine 226, asparagine 227, and serine 269.

The protein belongs to the IspH family. Requires [4Fe-4S] cluster as cofactor.

It carries out the reaction isopentenyl diphosphate + 2 oxidized [2Fe-2S]-[ferredoxin] + H2O = (2E)-4-hydroxy-3-methylbut-2-enyl diphosphate + 2 reduced [2Fe-2S]-[ferredoxin] + 2 H(+). The enzyme catalyses dimethylallyl diphosphate + 2 oxidized [2Fe-2S]-[ferredoxin] + H2O = (2E)-4-hydroxy-3-methylbut-2-enyl diphosphate + 2 reduced [2Fe-2S]-[ferredoxin] + 2 H(+). Its pathway is isoprenoid biosynthesis; dimethylallyl diphosphate biosynthesis; dimethylallyl diphosphate from (2E)-4-hydroxy-3-methylbutenyl diphosphate: step 1/1. The protein operates within isoprenoid biosynthesis; isopentenyl diphosphate biosynthesis via DXP pathway; isopentenyl diphosphate from 1-deoxy-D-xylulose 5-phosphate: step 6/6. In terms of biological role, catalyzes the conversion of 1-hydroxy-2-methyl-2-(E)-butenyl 4-diphosphate (HMBPP) into a mixture of isopentenyl diphosphate (IPP) and dimethylallyl diphosphate (DMAPP). Acts in the terminal step of the DOXP/MEP pathway for isoprenoid precursor biosynthesis. The protein is 4-hydroxy-3-methylbut-2-enyl diphosphate reductase of Aliivibrio salmonicida (strain LFI1238) (Vibrio salmonicida (strain LFI1238)).